Consider the following 57-residue polypeptide: Enolase (57 aa).

The active-site Proton donor is glutamate 25.

It belongs to the enolase family. It depends on Mg(2+) as a cofactor.

It localises to the cytoplasm. It is found in the secreted. Its subcellular location is the cell surface. It carries out the reaction (2R)-2-phosphoglycerate = phosphoenolpyruvate + H2O. Its pathway is carbohydrate degradation; glycolysis; pyruvate from D-glyceraldehyde 3-phosphate: step 4/5. Its function is as follows. Catalyzes the reversible conversion of 2-phosphoglycerate (2-PG) into phosphoenolpyruvate (PEP). It is essential for the degradation of carbohydrates via glycolysis. The polypeptide is Enolase (Clostridioides difficile (Peptoclostridium difficile)).